The following is a 254-amino-acid chain: Uracil-DNA glycosylase (254 aa).

The active-site Proton acceptor is Asp-78.

It belongs to the uracil-DNA glycosylase (UDG) superfamily. UNG family.

The protein localises to the cytoplasm. The enzyme catalyses Hydrolyzes single-stranded DNA or mismatched double-stranded DNA and polynucleotides, releasing free uracil.. In terms of biological role, excises uracil residues from the DNA which can arise as a result of misincorporation of dUMP residues by DNA polymerase or due to deamination of cytosine. The sequence is that of Uracil-DNA glycosylase from Bordetella petrii (strain ATCC BAA-461 / DSM 12804 / CCUG 43448).